The chain runs to 318 residues: UDP-N-acetylenolpyruvoylglucosamine reductase (318 aa).

Positions 38 to 204 (IGGVCPVIVE…LGIEILLKEG (167 aa)) constitute an FAD-binding PCMH-type domain. The active site involves Arg182. A compositionally biased stretch (basic and acidic residues) spans 212 to 229 (SLKDKRDRRNSSQPENKK). The segment at 212-232 (SLKDKRDRRNSSQPENKKSAG) is disordered. The active-site Proton donor is the Ser233. Residue Glu310 is part of the active site.

It belongs to the MurB family. It depends on FAD as a cofactor.

The protein localises to the cytoplasm. The catalysed reaction is UDP-N-acetyl-alpha-D-muramate + NADP(+) = UDP-N-acetyl-3-O-(1-carboxyvinyl)-alpha-D-glucosamine + NADPH + H(+). It participates in cell wall biogenesis; peptidoglycan biosynthesis. Cell wall formation. This chain is UDP-N-acetylenolpyruvoylglucosamine reductase, found in Leptospira interrogans serogroup Icterohaemorrhagiae serovar Lai (strain 56601).